The primary structure comprises 270 residues: Putative hydro-lyase H16_B1759 (270 aa).

Belongs to the D-glutamate cyclase family.

The chain is Putative hydro-lyase H16_B1759 from Cupriavidus necator (strain ATCC 17699 / DSM 428 / KCTC 22496 / NCIMB 10442 / H16 / Stanier 337) (Ralstonia eutropha).